The sequence spans 1039 residues: Alpha-mannosidase 2C1 (1039 aa).

Co(2+) contacts are provided by His-259, Asp-261, Asp-371, and His-576. The active-site Nucleophile is Asp-371.

The protein belongs to the glycosyl hydrolase 38 family. Co(2+) is required as a cofactor. As to expression, expressed in kidney and liver (at protein level). Widely expressed, with highest levels in lung, ovary and testis. Also detected at lower levels in heart, brain, liver, spleen, kidney and thymus.

The protein localises to the cytoplasm. It catalyses the reaction Hydrolysis of terminal, non-reducing alpha-D-mannose residues in alpha-D-mannosides.. Inhibited by 1,4-dideoxy-1,4-imino-d-mannitol (DIM) and EDTA. Its function is as follows. Cleaves alpha 1,2-, alpha 1,3-, and alpha 1,6-linked mannose residues from glycoproteins. Involved in the degradation of free oligosaccharides in the cytoplasm. The chain is Alpha-mannosidase 2C1 from Mus musculus (Mouse).